We begin with the raw amino-acid sequence, 404 residues long: SL1278 acyltransferase Chp1 (404 aa).

The Periplasmic segment spans residues 1–42 (MKCPGVSDCVATVRHDNVFAIAAGLRWSAAVPPLHKGDAVTK). The chain crosses the membrane as a helical span at residues 43–63 (LLVGAIAGGMLACAAILGDGI). The Cytoplasmic segment spans residues 64 to 404 (ASADTALIVP…RGLLPKGKKH (341 aa)). The PE-PPE domain occupies 104-325 (PTATRHVVSY…LRPIIDRAYQ (222 aa)).

It belongs to the mycobacterial PPE family.

The protein resides in the cell inner membrane. The enzyme catalyses 3 3'-(hydroxy)phthioceranyl-2'-palmitoyl(stearoyl)-2-O-sulfo-alpha,alpha-trehalose = 3,6,6'-tris-(hydroxy)phthioceranyl-2-palmitoyl(stearoyl)-2'-sulfo-alpha-alpha-trehalose + 2 2'-palmitoyl/stearoyl-2-O-sulfo-alpha,alpha-trehalose.. With respect to regulation, activity is potentiated by the SL-1 transporter MmpL8. Inhibited by the lipase inhibitor tetrahydrolipstatin (THL). Functionally, involved in the final steps of the cell wall sulfolipid-1 (SL-1) biosynthesis. Catalyzes two successive acylations of the precursor 2-palmitoyl-3-(C43)-phthioceranyl-alpha, alpha'-D-trehalose-2'-sulfate (SL1278) to yield the tetraacylated sulfolipid SL-1. The polypeptide is SL1278 acyltransferase Chp1 (Mycobacterium tuberculosis (strain ATCC 25618 / H37Rv)).